We begin with the raw amino-acid sequence, 624 residues long: (-)-beta-phellandrene synthase 2, chloroplastic (624 aa).

A chloroplast-targeting transit peptide spans 1–48; sequence MAIVSSVPLASKSCLHKSLISSIHKLKPFCRTIPTLGMSRPGKYVMPS. Mg(2+)-binding residues include Asp-375, Asp-379, and Asp-527. A DDXXD motif motif is present at residues 375–379; sequence DDMYD.

The protein belongs to the terpene synthase family. Tpsd subfamily. Mg(2+) serves as cofactor. The cofactor is Mn(2+).

Its subcellular location is the plastid. It localises to the chloroplast. It carries out the reaction (2E)-geranyl diphosphate = (-)-beta-phellandrene + diphosphate. It functions in the pathway terpene metabolism; oleoresin biosynthesis. Functionally, terpene synthase (TPS) involved in the biosynthesis of monoterpene natural products included in conifer oleoresin secretions and volatile emissions; these compounds contribute to biotic and abiotic stress defense against herbivores and pathogens. Catalyzes the conversion of (2E)-geranyl diphosphate (GPP) to (-)-beta-phellandrene. The sequence is that of (-)-beta-phellandrene synthase 2, chloroplastic from Picea sitchensis (Sitka spruce).